The following is a 265-amino-acid chain: MGQILGKIMMSHQPQPQEERSPQRSTSGYPLQEVVDDEVSGPSAPGVDPSPPRRSLGWKRKRECLDESDDEPEKELAPEPEETWVAETLCGLKMKAKRRRVSLVLPEYYEAFNRLLEDPVIKRLLAWDKDLRVSDKYLLAMVIAYFSRAGLPSWQYQRIHFFLALYLANDMEEDDEAPKQNIFYFLYEETRSHIPLLSELWFQLCRYMNPRARKNCSQIALFRKYRFHFFCSMRCRAWVSLEELEEIQAYDPEHWVWARDRAHLS.

Positions 1 to 80 are disordered; the sequence is MGQILGKIMM…EPEKELAPEP (80 aa). Over residues 66–80 the composition is skewed to acidic residues; sequence DESDDEPEKELAPEP.

The protein belongs to the Speedy/Ringo family.

The chain is Speedy protein E8 from Homo sapiens (Human).